We begin with the raw amino-acid sequence, 493 residues long: NAD(P)H-quinone oxidoreductase chain 4, chloroplastic (493 aa).

A run of 14 helical transmembrane segments spans residues 4–24 (FPWLSIIILFPLFAAFFIPLL), 34–54 (WYTLGICLLDFLVMSYIFGYY), 87–107 (MGLILLTGLVTTLAVLAAWPI), 111–131 (PKLFYFLMLVMYSGQIGLFTS), 134–154 (LFLFFLMWELELIPIYLLISL), 167–187 (FIFYTAIGSLFLFIATFTVCF), 212–232 (ILYLGFGFAYAVKLPIIPFHT), 242–262 (HYSTCMLLAGILLKMGGYGWI), 276–296 (FAPWLVILGTVQIIYAASVCL), 313–333 (MGFVLIGICSFTNIGLSGAIC), 334–354 (QMISHGLIGASLFFLAGTTYD), 385–405 (SLALPTMSGFVAEMMIFLGII), 417–437 (FIILFQALGVILTPIYLLSML), and 462–482 (VFIIVSLFIPVIIIGLYPNIL).

Belongs to the complex I subunit 4 family.

Its subcellular location is the plastid. It is found in the chloroplast thylakoid membrane. The catalysed reaction is a plastoquinone + NADH + (n+1) H(+)(in) = a plastoquinol + NAD(+) + n H(+)(out). It carries out the reaction a plastoquinone + NADPH + (n+1) H(+)(in) = a plastoquinol + NADP(+) + n H(+)(out). This chain is NAD(P)H-quinone oxidoreductase chain 4, chloroplastic, found in Chara vulgaris (Common stonewort).